The sequence spans 321 residues: Collectin-43 (321 aa).

An N-terminal signal peptide occupies residues 1-20 (MLPLPLSILLLLTQSQSFLG). A disordered region spans residues 43–163 (PADSLRGHDG…GEKGARGETS (121 aa)). The segment covering 47–65 (LRGHDGRDGKEGPQGEKGD) has biased composition (basic and acidic residues). A Collagen-like domain is found at 49 to 162 (GHDGRDGKEG…PGEKGARGET (114 aa)). 2 stretches are compositionally biased toward gly residues: residues 100 to 109 (GPEGGVGAPG) and 124 to 133 (GTPGPGGAIG). Positions 147 to 159 (KGDRGDPGEKGAR) are enriched in basic and acidic residues. Residues 222–321 (QLCREAKGQL…REERLVICEF (100 aa)) enclose the C-type lectin domain. 2 disulfide bridges follow: C224–C319 and C297–C311.

The protein belongs to the SFTPD family. Oligomeric complex of 4 set of homotrimers. Hydroxylated. In terms of tissue distribution, liver specific.

It is found in the secreted. Functionally, lectin that binds to various sugars: mannose = ManNAc &gt; fucose &gt; GlcNAc &gt; glucose = maltose &gt; galactose &gt; lactose &gt; GalNAc. Could play a role in immune defense. The sequence is that of Collectin-43 (CL43) from Bos taurus (Bovine).